We begin with the raw amino-acid sequence, 349 residues long: tRNA N6-adenosine threonylcarbamoyltransferase (349 aa).

Positions 118 and 122 each coordinate Fe cation. Residues 141 to 145 (LVSGG), Asp174, Gly187, and Asn280 contribute to the substrate site. Residue Asp308 coordinates Fe cation.

It belongs to the KAE1 / TsaD family. The cofactor is Fe(2+).

Its subcellular location is the cytoplasm. The catalysed reaction is L-threonylcarbamoyladenylate + adenosine(37) in tRNA = N(6)-L-threonylcarbamoyladenosine(37) in tRNA + AMP + H(+). In terms of biological role, required for the formation of a threonylcarbamoyl group on adenosine at position 37 (t(6)A37) in tRNAs that read codons beginning with adenine. Is involved in the transfer of the threonylcarbamoyl moiety of threonylcarbamoyl-AMP (TC-AMP) to the N6 group of A37, together with TsaE and TsaB. TsaD likely plays a direct catalytic role in this reaction. The protein is tRNA N6-adenosine threonylcarbamoyltransferase of Acidovorax sp. (strain JS42).